Consider the following 257-residue polypeptide: Folate receptor alpha (257 aa).

Residues 1-24 (MAQRMTTQLLLLLVWVAVVGEAQT) form the signal peptide. Disulfide bonds link cysteine 37–cysteine 65, cysteine 57–cysteine 105, cysteine 66–cysteine 109, cysteine 89–cysteine 175, cysteine 96–cysteine 146, cysteine 135–cysteine 209, cysteine 139–cysteine 189, and cysteine 152–cysteine 169. A glycan (N-linked (GlcNAc...) asparagine) is linked at asparagine 69. Residues aspartate 103, tyrosine 107, 124–128 (WRKER), 157–162 (HKGWNW), and serine 196 contribute to the folate site. The N-linked (GlcNAc...) asparagine glycan is linked to asparagine 161. N-linked (GlcNAc...) asparagine glycosylation is present at asparagine 201. A lipid anchor (GPI-anchor amidated serine) is attached at serine 234. Residues 235–257 (GAGPWAAWPFLLSLALMLLWLLS) constitute a propeptide, removed in mature form.

The protein belongs to the folate receptor family. In terms of processing, the secreted form is derived from the membrane-bound form either by cleavage of the GPI anchor, or/and by proteolysis catalyzed by a metalloprotease. As to expression, primarily expressed in tissues of epithelial origin. Expression is increased in malignant tissues. Expressed in kidney, lung and cerebellum. Detected in placenta and thymus epithelium.

Its subcellular location is the cell membrane. It localises to the apical cell membrane. It is found in the basolateral cell membrane. The protein localises to the secreted. The protein resides in the cytoplasmic vesicle. Its subcellular location is the clathrin-coated vesicle. It localises to the endosome. In terms of biological role, binds to folate and reduced folic acid derivatives and mediates delivery of 5-methyltetrahydrofolate and folate analogs into the interior of cells. Has high affinity for folate and folic acid analogs at neutral pH. Exposure to slightly acidic pH after receptor endocytosis triggers a conformation change that strongly reduces its affinity for folates and mediates their release. Required for normal embryonic development and normal cell proliferation. The polypeptide is Folate receptor alpha (FOLR1) (Homo sapiens (Human)).